Here is a 427-residue protein sequence, read N- to C-terminus: 5-hydroxybenzimidazole synthase BzaA (427 aa).

This sequence belongs to the ThiC family. 5-hydroxybenzimidazole synthase subfamily. The cofactor is [4Fe-4S] cluster.

It catalyses the reaction 5-amino-1-(5-phospho-beta-D-ribosyl)imidazole + AH2 + S-adenosyl-L-methionine = 5-hydroxybenzimidazole + 5'-deoxyadenosine + formate + L-methionine + A + NH4(+) + phosphate + 2 H(+). It participates in cofactor biosynthesis; adenosylcobalamin biosynthesis. Functionally, together with BzaB, catalyzes the conversion of aminoimidazole ribotide (AIR) to 5-hydroxybenzimidazole (5-HBI) in a radical S-adenosyl-L-methionine (SAM)-dependent reaction. Is thus involved in the anaerobic biosynthesis of dimethylbenzimidazole (DMB), the lower axial ligand of vitamin B12 (cobalamin). Requires BzaB for catalytic activity, as BzaA alone displays no activity. This Eubacterium limosum protein is 5-hydroxybenzimidazole synthase BzaA.